Here is a 398-residue protein sequence, read N- to C-terminus: Acetate kinase (398 aa).

Asparagine 7 serves as a coordination point for Mg(2+). Lysine 14 contributes to the ATP binding site. Residue arginine 91 coordinates substrate. The Proton donor/acceptor role is filled by aspartate 148. ATP contacts are provided by residues 208–212, 283–285, and 331–335; these read HLGNG, DFR, and GIGEH. Glutamate 386 lines the Mg(2+) pocket.

Belongs to the acetokinase family. As to quaternary structure, homodimer. It depends on Mg(2+) as a cofactor. Mn(2+) serves as cofactor.

It is found in the cytoplasm. The enzyme catalyses acetate + ATP = acetyl phosphate + ADP. It functions in the pathway metabolic intermediate biosynthesis; acetyl-CoA biosynthesis; acetyl-CoA from acetate: step 1/2. In terms of biological role, catalyzes the formation of acetyl phosphate from acetate and ATP. Can also catalyze the reverse reaction. This chain is Acetate kinase, found in Clostridium botulinum (strain Alaska E43 / Type E3).